The chain runs to 875 residues: Neurotrypsin (875 aa).

Positions 1-20 (MTLARFALALLFGVLPEVVG) are cleaved as a signal peptide. N-linked (GlcNAc...) asparagine glycosylation occurs at Asn26. Residues 51–72 (QRHRRTRPPPPLPRFPRPPRAL) are disordered. Positions 58 to 71 (PPPPLPRFPRPPRA) are enriched in pro residues. The region spanning 93–165 (CPAGEPWVSV…GKVDWGYCDC (73 aa)) is the Kringle domain. 20 disulfides stabilise this stretch: Cys93/Cys165, Cys109/Cys149, Cys138/Cys163, Cys195/Cys259, Cys208/Cys269, Cys239/Cys249, Cys305/Cys369, Cys318/Cys379, Cys349/Cys359, Cys412/Cys475, Cys425/Cys485, Cys455/Cys465, Cys525/Cys589, Cys538/Cys599, Cys569/Cys579, Cys619/Cys750, Cys661/Cys677, Cys765/Cys831, Cys794/Cys808, and Cys821/Cys850. SRCR domains are found at residues 170–271 (VRLR…MCSF), 280–381 (IRLV…SCTP), 387–487 (IRLA…ACYP), and 500–601 (VRLM…ICDY). The segment at 619–630 (CGLRLLHRRQKR) is zymogen activation region. Positions 631 to 874 (IIGGKNSLRG…FVPWIKSVTK (244 aa)) constitute a Peptidase S1 domain. The Charge relay system role is filled by His676. N-linked (GlcNAc...) asparagine glycosylation occurs at Asn683. Asp726 serves as the catalytic Charge relay system. Ser825 (charge relay system) is an active-site residue.

This sequence belongs to the peptidase S1 family.

It localises to the secreted. In terms of biological role, plays a role in neuronal plasticity and the proteolytic action may subserve structural reorganizations associated with learning and memory operations. The protein is Neurotrypsin (PRSS12) of Saguinus labiatus (Red-chested mustached tamarin).